The sequence spans 411 residues: Mitotic apparatus protein p62 (411 aa).

Acidic residues-rich tracts occupy residues 134–156 (AYEV…EEEE), 183–201 (ELDE…EEEI), and 246–321 (DDDE…EEDS). Residues 134-378 (AYEVGDEDLE…KSPSKPKKEE (245 aa)) are disordered. Positions 351–367 (GMKEKKTYSLEDMKQDL) are enriched in basic and acidic residues.

It belongs to the nucleoplasmin family. Post-translationally, phosphorylated by CaM-kinase II in vitro.

It localises to the nucleus. Its function is as follows. Required for mitotic progression. Binds to chromatin. The sequence is that of Mitotic apparatus protein p62 from Lytechinus pictus (Painted sea urchin).